Consider the following 190-residue polypeptide: Elongation factor P 1 (190 aa).

The protein belongs to the elongation factor P family.

It is found in the cytoplasm. The protein operates within protein biosynthesis; polypeptide chain elongation. Its function is as follows. Involved in peptide bond synthesis. Stimulates efficient translation and peptide-bond synthesis on native or reconstituted 70S ribosomes in vitro. Probably functions indirectly by altering the affinity of the ribosome for aminoacyl-tRNA, thus increasing their reactivity as acceptors for peptidyl transferase. In Lactobacillus johnsonii (strain CNCM I-12250 / La1 / NCC 533), this protein is Elongation factor P 1 (efp1).